A 476-amino-acid polypeptide reads, in one-letter code: Glutamate--tRNA ligase (476 aa).

The 'HIGH' region signature appears at Pro-9–Thr-19. Positions Lys-248–Arg-252 match the 'KMSKS' region motif. An ATP-binding site is contributed by Lys-251.

The protein belongs to the class-I aminoacyl-tRNA synthetase family. Glutamate--tRNA ligase type 1 subfamily. Monomer.

It localises to the cytoplasm. It catalyses the reaction tRNA(Glu) + L-glutamate + ATP = L-glutamyl-tRNA(Glu) + AMP + diphosphate. Catalyzes the attachment of glutamate to tRNA(Glu) in a two-step reaction: glutamate is first activated by ATP to form Glu-AMP and then transferred to the acceptor end of tRNA(Glu). This chain is Glutamate--tRNA ligase, found in Prochlorococcus marinus (strain NATL2A).